Consider the following 466-residue polypeptide: Probable ribonuclease FAU-1 (466 aa).

The 63-residue stretch at 90 to 152 (GAIYAGTVTD…TDGRPVLDTT (63 aa)) folds into the S1 motif domain.

Belongs to the FAU-1 family.

Functionally, probable RNase involved in rRNA stability through maturation and/or degradation of precursor rRNAs. Binds to RNA in loop regions with AU-rich sequences. In Haloarcula marismortui (strain ATCC 43049 / DSM 3752 / JCM 8966 / VKM B-1809) (Halobacterium marismortui), this protein is Probable ribonuclease FAU-1.